The chain runs to 493 residues: MTESTDPSSRAGEAGALWGGRFAGGPSPELVALSRSTHFDWQLAPYDIAGSRAHARALAAAGYLSDAERQAMLQALDTLEDRVRSGALVASEADEDVHGALERGLMDIAGPDLGGKLRAGRSRNDQIATLVRMYLRDHAAVIHAMLVQLVDALAAQAEAAGGAIMPGRTHLQHAQPVLLAHHLLAHCWPLVRDLERLADWDARADVSPYGSGALAGSTLGLDASAVARDLGFARSSENSIDGTAARDVVAEFAFVLAQVGIDLSRLSEEIILWNTREFGFVTLSDSFSTGSSIMPQKKNPDIAELARGKSGRLIGNLSGLLATLKGLPLAYNRDLQEDKEPVFDSVQTLEVLLPAFTGMIATLRFDVDRMAELAPQGFSLATDVAEWLVKHRVAFRDAHEITGELVKLAESRGVGLEDLSDDDLRAVSPHLVPEVREVLSIDGSVASRDGVGGTARVRVDEQRAELVRRVAELRARADAAAERRAAASAAASA.

Belongs to the lyase 1 family. Argininosuccinate lyase subfamily.

It localises to the cytoplasm. The catalysed reaction is 2-(N(omega)-L-arginino)succinate = fumarate + L-arginine. The protein operates within amino-acid biosynthesis; L-arginine biosynthesis; L-arginine from L-ornithine and carbamoyl phosphate: step 3/3. The protein is Argininosuccinate lyase of Clavibacter sepedonicus (Clavibacter michiganensis subsp. sepedonicus).